The following is a 123-amino-acid chain: MFAVIKTGGKQYRVAADDVITIEKLEGVAGDKIEFTEILMVGVGADATIGAPFVEGAVVSAEVVDQGRAKKVIAFKKRRRQNSKRSRGHRQHQTVVRILDIAAAGGKAKKASKKTEAAAEAAN.

This sequence belongs to the bacterial ribosomal protein bL21 family. In terms of assembly, part of the 50S ribosomal subunit. Contacts protein L20.

This protein binds to 23S rRNA in the presence of protein L20. This is Large ribosomal subunit protein bL21 from Sinorhizobium fredii (strain NBRC 101917 / NGR234).